A 573-amino-acid polypeptide reads, in one-letter code: Probable CoA ligase CCL13 (573 aa).

ATP-binding positions include 216–224 (TSGTTARPK), 352–357 (HIYGLT), aspartate 449, 461–464 (LKDR), and lysine 556. Positions 284–352 (SPKAIFDNIH…MEEMGFQVNH (69 aa)) are SBD1. The segment at 353–429 (IYGLTETHGP…FRGNTVMSGY (77 aa)) is SBD2.

The protein belongs to the ATP-dependent AMP-binding enzyme family.

The protein resides in the cytoplasm. It localises to the cytosol. The chain is Probable CoA ligase CCL13 from Humulus lupulus (European hop).